The chain runs to 348 residues: Fe(3+) ions import ATP-binding protein FbpC (348 aa).

The 231-residue stretch at Val7 to Met237 folds into the ABC transporter domain. An ATP-binding site is contributed by Gly39 to Thr46.

Belongs to the ABC transporter superfamily. Fe(3+) ion importer (TC 3.A.1.10) family. The complex is composed of two ATP-binding proteins (FbpC), two transmembrane proteins (FbpB) and a solute-binding protein (FbpA).

The protein localises to the cell inner membrane. The catalysed reaction is Fe(3+)(out) + ATP + H2O = Fe(3+)(in) + ADP + phosphate + H(+). Its function is as follows. Part of the ABC transporter complex FbpABC involved in Fe(3+) ions import. Responsible for energy coupling to the transport system. In Escherichia coli O157:H7, this protein is Fe(3+) ions import ATP-binding protein FbpC.